Reading from the N-terminus, the 62-residue chain is Sperm protamine P1 (62 aa).

The segment at 1–62 (MARYRRHSRS…RRYSRRGRRR (62 aa)) is disordered.

This sequence belongs to the protamine P1 family. As to expression, testis.

It localises to the nucleus. It is found in the chromosome. Its function is as follows. Protamines substitute for histones in the chromatin of sperm during the haploid phase of spermatogenesis. They compact sperm DNA into a highly condensed, stable and inactive complex. The chain is Sperm protamine P1 (PRM1) from Pseudantechinus bilarni (Sandstone dibbler).